Here is a 64-residue protein sequence, read N- to C-terminus: Large ribosomal subunit protein bL32 (64 aa).

This sequence belongs to the bacterial ribosomal protein bL32 family.

In Mycoplasma mobile (strain ATCC 43663 / 163K / NCTC 11711) (Mesomycoplasma mobile), this protein is Large ribosomal subunit protein bL32.